Reading from the N-terminus, the 483-residue chain is Regulatory protein ViaA (483 aa).

This sequence belongs to the ViaA family. In terms of assembly, homodimer. Interacts with RavA.

The protein resides in the cytoplasm. Functionally, component of the RavA-ViaA chaperone complex, which may act on the membrane to optimize the function of some of the respiratory chains. ViaA stimulates the ATPase activity of RavA. The protein is Regulatory protein ViaA of Enterobacter sp. (strain 638).